The sequence spans 156 residues: Arginine repressor (156 aa).

It belongs to the ArgR family.

Its subcellular location is the cytoplasm. The protein operates within amino-acid biosynthesis; L-arginine biosynthesis [regulation]. Regulates arginine biosynthesis genes. This chain is Arginine repressor, found in Klebsiella pneumoniae (strain 342).